We begin with the raw amino-acid sequence, 55 residues long: Large ribosomal subunit protein bL33 (55 aa).

Belongs to the bacterial ribosomal protein bL33 family.

The polypeptide is Large ribosomal subunit protein bL33 (Bartonella henselae (strain ATCC 49882 / DSM 28221 / CCUG 30454 / Houston 1) (Rochalimaea henselae)).